Reading from the N-terminus, the 577-residue chain is Guanine nucleotide-binding protein-like 3-like protein (577 aa).

Basic residues predominate over residues 1-30 (MMKIRHKNKKPGKGSKGCKKPARQNGKKVT). The interval 1 to 75 (MMKIRHKNKK…VAREQERQRH (75 aa)) is disordered. The tract at residues 9–28 (KKPGKGSKGCKKPARQNGKK) is required for nucleolar localization. The span at 42-75 (GNDHASREAELKKKRVEEMREKQQVAREQERQRH) shows a compositional bias: basic and acidic residues. Residues 43 to 103 (NDHASREAEL…QKEEVLQELN (61 aa)) adopt a coiled-coil conformation. The 187-residue stretch at 118–304 (YKEFRKVVEY…LLDAPGIVPG (187 aa)) folds into the CP-type G domain. GTP-binding positions include 166–169 (NKID), 253–260 (GLPNVGKS), and 297–300 (DAPG).

Belongs to the TRAFAC class YlqF/YawG GTPase family. In terms of assembly, interacts with MDM2; this interaction, which occurs in the nucleoplasm, stabilizes MDM2. Indirectly interacts with TP53, via MDM2-binding. Interacts with TERF1; this interaction probably occurs in the nucleoplasm and is increased during mitosis, when the nucleolus is disassembled. This binding may promote TERF1 homodimerization. Interacts with TERT.

The protein localises to the nucleus. Its subcellular location is the nucleolus. In terms of biological role, stabilizes TERF1 telomeric association by preventing TERF1 recruitment by PML. Stabilizes TERF1 protein by preventing its ubiquitination and hence proteasomal degradation. Does so by interfering with TERF1-binding to FBXO4 E3 ubiquitin-protein ligase. Required for cell proliferation. By stabilizing TRF1 protein during mitosis, promotes metaphase-to-anaphase transition. Stabilizes MDM2 protein by preventing its ubiquitination, and hence proteasomal degradation. By acting on MDM2, may affect TP53 activity. Required for normal processing of ribosomal pre-rRNA. Binds GTP. This chain is Guanine nucleotide-binding protein-like 3-like protein (Gnl3l), found in Mus musculus (Mouse).